The primary structure comprises 251 residues: 1-(5-phosphoribosyl)-5-[(5-phosphoribosylamino)methylideneamino] imidazole-4-carboxamide isomerase (251 aa).

Catalysis depends on aspartate 8, which acts as the Proton acceptor. Aspartate 129 serves as the catalytic Proton donor.

It belongs to the HisA/HisF family.

It is found in the cytoplasm. It catalyses the reaction 1-(5-phospho-beta-D-ribosyl)-5-[(5-phospho-beta-D-ribosylamino)methylideneamino]imidazole-4-carboxamide = 5-[(5-phospho-1-deoxy-D-ribulos-1-ylimino)methylamino]-1-(5-phospho-beta-D-ribosyl)imidazole-4-carboxamide. Its pathway is amino-acid biosynthesis; L-histidine biosynthesis; L-histidine from 5-phospho-alpha-D-ribose 1-diphosphate: step 4/9. The polypeptide is 1-(5-phosphoribosyl)-5-[(5-phosphoribosylamino)methylideneamino] imidazole-4-carboxamide isomerase (Desulfosudis oleivorans (strain DSM 6200 / JCM 39069 / Hxd3) (Desulfococcus oleovorans)).